A 146-amino-acid polypeptide reads, in one-letter code: Hemoglobin subunit beta (146 aa).

Valine 1 carries the post-translational modification N-acetylvaline. The Globin domain occupies 2-146 (HLTGEEKTAV…VANALAHKYH (145 aa)). Phosphothreonine is present on threonine 12. Serine 44 bears the Phosphoserine mark. The residue at position 59 (lysine 59) is an N6-acetyllysine. Histidine 63 contributes to the heme b binding site. At lysine 82 the chain carries N6-acetyllysine. Histidine 92 is a heme b binding site. Cysteine 93 is modified (S-nitrosocysteine). An N6-acetyllysine modification is found at lysine 144.

The protein belongs to the globin family. In terms of assembly, heterotetramer of two alpha chains and two beta chains. As to expression, red blood cells.

Involved in oxygen transport from the lung to the various peripheral tissues. This is Hemoglobin subunit beta (HBB) from Nasua nasua (Ring-tailed coati).